The sequence spans 927 residues: Tubulin monoglycylase TTLL3 (927 aa).

Residues 35–47 are compositionally biased toward polar residues; it reads RSQPSELRTNFSS. Disordered regions lie at residues 35–113 and 194–227; these read RSQP…PQPV and HPPG…EENE. Positions 216-226 are enriched in acidic residues; sequence DATEDEDEEEN. Positions 345 to 702 constitute a TTL domain; that stretch reads VLKLVVKLEE…DRRLDRSCDT (358 aa). ATP-binding positions include K476, 482–483, 514–517, 527–529, and 571–572; these read RG, QKYI, KFD, and CN. R482 provides a ligand contact to a protein. Positions 649, 662, and 664 each coordinate Mg(2+). E662 serves as a coordination point for ATP. Disordered regions lie at residues 735 to 799 and 897 to 927; these read VPVG…SGKG and EEGH…KTET. Over residues 752 to 769 the composition is skewed to polar residues; sequence LTQQGSGESKDSGSPTHR. Residues 776–788 are compositionally biased toward basic and acidic residues; sequence ARAESLEHTEKPE. A compositionally biased stretch (polar residues) spans 916-927; it reads LSSTEPCSKTET.

Mg(2+) serves as cofactor. In terms of tissue distribution, highly expressed in brain and testis. Expressed in heart, kidney, liver, lung, muscle, spleen, trachea and colon. Expressed in sperm flagellum. In the brain, specifically expressed in ependymal cilia.

It is found in the cytoplasm. It localises to the cytoskeleton. The protein localises to the cell projection. Its subcellular location is the cilium. The protein resides in the cilium axoneme. It is found in the flagellum axoneme. It catalyses the reaction L-glutamyl-[protein] + glycine + ATP = glycyl-L-glutamyl-[protein] + ADP + phosphate + H(+). Monoglycylase which modifies alpha- and beta-tubulin, adding a single glycine on the gamma-carboxyl groups of specific glutamate residues to generate monoglycine side chains within the C-terminal tail of tubulin. Not involved in elongation step of the polyglycylation reaction. Preferentially glycylates a beta-tail peptide over the alpha-tail, although shifts its preference toward alpha-tail as beta-tail glutamylation increases. Competes with polyglutamylases for modification site on beta-tubulin substrate, thereby creating an anticorrelation between glycylation and glutamylation reactions. Together with TTLL8, mediates microtubule glycylation of primary and motile cilia, which is essential for their stability and maintenance. Involved in microtubule glycylation of primary cilia in colon which controls cell proliferation of epithelial cells and plays an essential role in colon cancer development. Together with TTLL8, glycylates sperm flagella which regulates axonemal dynein motor activity, thereby controlling flagellar beat, directional sperm swimming and male fertility. This Mus musculus (Mouse) protein is Tubulin monoglycylase TTLL3.